The chain runs to 265 residues: tRNA pseudouridine synthase A (265 aa).

Asp53 (nucleophile) is an active-site residue. Tyr111 provides a ligand contact to substrate.

Belongs to the tRNA pseudouridine synthase TruA family. In terms of assembly, homodimer.

The catalysed reaction is uridine(38/39/40) in tRNA = pseudouridine(38/39/40) in tRNA. Its function is as follows. Formation of pseudouridine at positions 38, 39 and 40 in the anticodon stem and loop of transfer RNAs. The chain is tRNA pseudouridine synthase A from Acinetobacter baumannii (strain AB307-0294).